A 484-amino-acid chain; its full sequence is Glutamate--tRNA ligase (484 aa).

Positions P11–N21 match the 'HIGH' region motif. Positions K255–R259 match the 'KMSKS' region motif. K258 lines the ATP pocket.

This sequence belongs to the class-I aminoacyl-tRNA synthetase family. Glutamate--tRNA ligase type 1 subfamily. As to quaternary structure, monomer.

It is found in the cytoplasm. It carries out the reaction tRNA(Glu) + L-glutamate + ATP = L-glutamyl-tRNA(Glu) + AMP + diphosphate. Functionally, catalyzes the attachment of glutamate to tRNA(Glu) in a two-step reaction: glutamate is first activated by ATP to form Glu-AMP and then transferred to the acceptor end of tRNA(Glu). This is Glutamate--tRNA ligase from Streptococcus suis (strain 98HAH33).